A 527-amino-acid chain; its full sequence is MTTQAAEVAKRRTFAIISHPDAGKTTITEKLLLMGKAIAVAGTVKSRKSDRHATSDWMEMEKQRGISITTSVMQFPYREHMINLLDTPGHEDFSEDTYRTLTAVDSALMVLDGGKGVEPRTIALMEVCRLRDTPIVSFINKLDRDIRDPIELLDEIEAVLKIKAAPITWPIGCYKDFKGVYHLADDRIIVYVPGHGHERIETKVIEKLDSDEARAHLGDLYDNFVEELELVQGACHEFDKDAFLKGEMTPVFFGTALGNFGVDQVLDCIVDWAPQPLSRATHERSVEPTEEKFSGFVFKIQANMDPKHRDRIAFMRICSGKYEKGMKMRHVRLGKDVKIADALTFFSSEREQLEEAYAGDIIGLHNHGTIQIGDTFSEGENFGFTGIPHFAPELFRRVRLKDPLKSKQLRQGLQELAEEGATQVFFPERNNDIILGAVGVLQFDVVASRLKEEYKVECAYEAINVWSARWIECDDEKKLKEFKDKAFENLSVDGGGHLTYLAPTRVNLSLMEERWPDIRFRATREHH.

A tr-type G domain is found at 9-277; it reads AKRRTFAIIS…CIVDWAPQPL (269 aa). Residues 18–25, 86–90, and 140–143 each bind GTP; these read SHPDAGKT, DTPGH, and NKLD.

The protein belongs to the TRAFAC class translation factor GTPase superfamily. Classic translation factor GTPase family. PrfC subfamily.

It is found in the cytoplasm. Increases the formation of ribosomal termination complexes and stimulates activities of RF-1 and RF-2. It binds guanine nucleotides and has strong preference for UGA stop codons. It may interact directly with the ribosome. The stimulation of RF-1 and RF-2 is significantly reduced by GTP and GDP, but not by GMP. In Pseudomonas aeruginosa (strain LESB58), this protein is Peptide chain release factor 3.